Here is a 614-residue protein sequence, read N- to C-terminus: Zinc finger and SCAN domain-containing protein 2 (614 aa).

Disordered regions lie at residues 1–25 (MAAE…EDEQ), 42–73 (AVLQ…EGPQ), and 162–200 (NISG…RVVP). Residues 69–127 (AEGPQGALVRFRELCRRWLRPEVHTKEQMLTVLPREIQAWLQEHRPESSEEAVALVEDL) enclose the SCAN box domain. 14 consecutive C2H2-type zinc fingers follow at residues 222–244 (YECP…ERTH), 250–272 (YKCD…QTTH), 278–300 (YKCR…QRIH), 306–328 (FQCA…QRTH), 334–356 (YSCP…QGIH), 362–384 (YACK…QRIH), 390–412 (YKCT…RRTH), 418–440 (YQCG…RRTH), 446–468 (YKCG…QGTH), 474–496 (YECL…QRTH), 502–524 (YRCG…QRTH), 530–552 (YKCL…QRAH), 558–580 (YRCP…QRIH), and 586–608 (YRCP…QRTH).

It belongs to the krueppel C2H2-type zinc-finger protein family. In terms of tissue distribution, in the adult, predominantly found in spermatids. Also present in the embryo.

It is found in the nucleus. Its function is as follows. May be involved in transcriptional regulation during the post-meiotic stages of spermatogenesis. This chain is Zinc finger and SCAN domain-containing protein 2 (Zscan2), found in Mus musculus (Mouse).